The primary structure comprises 272 residues: Ingression protein fic1 (272 aa).

Residues 1 to 107 (MSKNPLGTLV…MKEELQSEWY (107 aa)) form the C2 domain. Positions 155–187 (VPKKPSKPSKPRKKVPVSHPLPPTPPSREEHVS) are disordered. The segment covering 158–170 (KPSKPSKPRKKVP) has biased composition (basic residues).

The protein belongs to the INN1/fic1 family. Interacts with cdc15 and imp2.

The protein resides in the cytoplasm. Its subcellular location is the nucleus. Involved in the ingression of the plasma membrane during cytokinesis, leading to the separation of the daughter cells. Unlike its S.cerevisiae ortholog INN1, it does not play an essential role, probably because the actinomyosin ring is connected to the cell cortex by many more proteins. The polypeptide is Ingression protein fic1 (fic1) (Schizosaccharomyces pombe (strain 972 / ATCC 24843) (Fission yeast)).